The chain runs to 294 residues: Acetyl-coenzyme A carboxylase carboxyl transferase subunit beta (294 aa).

The CoA carboxyltransferase N-terminal domain maps to 30–294 (IMTKCPECKK…PETGGESDGE (265 aa)). Zn(2+) is bound by residues cysteine 34, cysteine 37, cysteine 53, and cysteine 56. The C4-type zinc-finger motif lies at 34–56 (CPECKKIMYTKELQKNLMVCNYC).

Belongs to the AccD/PCCB family. Acetyl-CoA carboxylase is a heterohexamer composed of biotin carboxyl carrier protein (AccB), biotin carboxylase (AccC) and two subunits each of ACCase subunit alpha (AccA) and ACCase subunit beta (AccD). The cofactor is Zn(2+).

It is found in the cytoplasm. The catalysed reaction is N(6)-carboxybiotinyl-L-lysyl-[protein] + acetyl-CoA = N(6)-biotinyl-L-lysyl-[protein] + malonyl-CoA. It functions in the pathway lipid metabolism; malonyl-CoA biosynthesis; malonyl-CoA from acetyl-CoA: step 1/1. In terms of biological role, component of the acetyl coenzyme A carboxylase (ACC) complex. Biotin carboxylase (BC) catalyzes the carboxylation of biotin on its carrier protein (BCCP) and then the CO(2) group is transferred by the transcarboxylase to acetyl-CoA to form malonyl-CoA. This is Acetyl-coenzyme A carboxylase carboxyl transferase subunit beta from Listeria welshimeri serovar 6b (strain ATCC 35897 / DSM 20650 / CCUG 15529 / CIP 8149 / NCTC 11857 / SLCC 5334 / V8).